Reading from the N-terminus, the 41-residue chain is MIKNFIFDNLIILAVPFMIKTSLKTNLIFFFLCVFVPHMAS.

Residues 10 to 32 traverse the membrane as a helical segment; it reads LIILAVPFMIKTSLKTNLIFFFL.

It is found in the cell inner membrane. This is an uncharacterized protein from Escherichia coli (strain K12).